Reading from the N-terminus, the 215-residue chain is MSKVYDWFEERLEIQAIADDITSKYVPPHVNIFYCLGGITLTCFLVQVATGFAMTFYYRPTVTEAFASVQYIMTEANFGWLIRSVHRWSASMMVLMMILHVFRVYLTGGFKKPRELTWVTGVVLGVLTASFGVTGYSLPRDQIGYWAVKIVTGVPEAIPVIGAPLVELLRGSASVGQSTLTRFYSLHTFVLPLLTAVFMLMHFPMIRKQGISGPL.

The chain crosses the membrane as a helical span at residues 32-52 (IFYCLGGITLTCFLVQVATGF). C35 lines the heme c pocket. Residues H86 and H100 each coordinate heme b. Helical transmembrane passes span 90-110 (ASMMVLMMILHVFRVYLTGGF), 116-136 (LTWVTGVVLGVLTASFGVTGY), and 186-206 (LHTFVLPLLTAVFMLMHFPMI). 2 residues coordinate heme b: H187 and H202.

It belongs to the cytochrome b family. PetB subfamily. In terms of assembly, the 4 large subunits of the cytochrome b6-f complex are cytochrome b6, subunit IV (17 kDa polypeptide, PetD), cytochrome f and the Rieske protein, while the 4 small subunits are PetG, PetL, PetM and PetN. The complex functions as a dimer. It depends on heme b as a cofactor. Heme c is required as a cofactor.

Its subcellular location is the plastid. It localises to the chloroplast thylakoid membrane. Functionally, component of the cytochrome b6-f complex, which mediates electron transfer between photosystem II (PSII) and photosystem I (PSI), cyclic electron flow around PSI, and state transitions. The chain is Cytochrome b6 from Jasminum nudiflorum (Winter jasmine).